The chain runs to 157 residues: MPRRREVPKREILPDPKFGDVDLAKFMNVIMQGGKKAVAERIIYGALEQIEKKNPGKDPLEAFHMAIGNIKPMVEVKSRRVGGANYQVPVEVRPVRRMALAMRWLKEAAKKRGEKSMSLRLANELMEATEGRGGAMKKRDEVHRMAEANKAFSHFRF.

The protein belongs to the universal ribosomal protein uS7 family. In terms of assembly, part of the 30S ribosomal subunit. Contacts proteins S9 and S11.

Its function is as follows. One of the primary rRNA binding proteins, it binds directly to 16S rRNA where it nucleates assembly of the head domain of the 30S subunit. Is located at the subunit interface close to the decoding center, probably blocks exit of the E-site tRNA. This Polaromonas naphthalenivorans (strain CJ2) protein is Small ribosomal subunit protein uS7.